The sequence spans 215 residues: LexA repressor (215 aa).

The segment at residues Arg28 to Arg48 is a DNA-binding region (H-T-H motif). Residues Ser133 and Lys170 each act as for autocatalytic cleavage activity in the active site.

The protein belongs to the peptidase S24 family. In terms of assembly, homodimer.

The catalysed reaction is Hydrolysis of Ala-|-Gly bond in repressor LexA.. Represses a number of genes involved in the response to DNA damage (SOS response), including recA and lexA. In the presence of single-stranded DNA, RecA interacts with LexA causing an autocatalytic cleavage which disrupts the DNA-binding part of LexA, leading to derepression of the SOS regulon and eventually DNA repair. The chain is LexA repressor from Burkholderia mallei (strain NCTC 10247).